Consider the following 336-residue polypeptide: Aspartate--ammonia ligase (336 aa).

This sequence belongs to the class-II aminoacyl-tRNA synthetase family. AsnA subfamily.

Its subcellular location is the cytoplasm. It catalyses the reaction L-aspartate + NH4(+) + ATP = L-asparagine + AMP + diphosphate + H(+). It functions in the pathway amino-acid biosynthesis; L-asparagine biosynthesis; L-asparagine from L-aspartate (ammonia route): step 1/1. In Lactobacillus johnsonii (strain CNCM I-12250 / La1 / NCC 533), this protein is Aspartate--ammonia ligase.